Here is a 420-residue protein sequence, read N- to C-terminus: MPLTPTPSTRPSRPTSFSMSGPTTLGVRLTSCSSSLRSSPSSSPDSPTSPTSSTTGSCPKTPPGTPPLPRTSRTARPSSCMMLSCITPQGRSLTSFSSVPSSRRSMPPLSFRLSRASRISRSIRNFTASVSRVLTLSMSRRATQPPTTRSRVRPSTGSRPPVSPLVTSSSPSPFSTLSARSIPSSSSVAALPSFRPKTSLPSAFRTPSPSPLLPPSTRTFVTGWSPARCTTRSSIMSEPSAPFGLPTPPASSGLRSASLSTAGSPLPPGTTFSTSRSRPPPFVPTPRIPFSSRPSLACPTGFAPTLGRSGAWLPPRPLSLPGPLPVPSAGSSPFTPTVSGCSASTSSAGGSGLVSHSMAPSQGSFGRPIQPAARQCSLPTQPLSAKSLLVWQTGVLPPPSGRVCSPRPLRRPGSPTQPWP.

2 stretches are compositionally biased toward low complexity: residues 1 to 18 (MPLTPTPSTRPSRPTSFS) and 30 to 59 (TSCSSSLRSSPSSSPDSPTSPTSSTTGSCP). Disordered stretches follow at residues 1 to 77 (MPLT…TARP), 137 to 181 (SMSR…SARS), 195 to 219 (RPKTSLPSAFRTPSPSPLLPPSTRT), 235 to 281 (IMSE…RPPP), 327 to 370 (PSAG…RPIQ), and 396 to 420 (LPPPSGRVCSPRPLRRPGSPTQPWP). Over residues 60-69 (KTPPGTPPLP) the composition is skewed to pro residues. Residues 137 to 157 (SMSRRATQPPTTRSRVRPSTG) show a composition bias toward polar residues. The segment covering 158–181 (SRPPVSPLVTSSSPSPFSTLSARS) has biased composition (low complexity). A compositionally biased stretch (polar residues) spans 253–263 (GLRSASLSTAG). Over residues 327 to 348 (PSAGSSPFTPTVSGCSASTSSA) the composition is skewed to low complexity.

Its function is as follows. Cell-to-cell movement. This chain is Putative movement protein, found in Maize rayado fino virus (isolate Costa Rica/Guapiles) (MRFV).